The primary structure comprises 122 residues: uncharacterized protein (122 aa).

It localises to the mitochondrion. This is an uncharacterized protein from Arabidopsis thaliana (Mouse-ear cress).